The primary structure comprises 324 residues: Anthranilate phosphoribosyltransferase (324 aa).

5-phospho-alpha-D-ribose 1-diphosphate contacts are provided by residues G75, 78–79, T83, 85–88, 102–110, and S114; these read GD, NVST, and KHGNFGITG. An anthranilate-binding site is contributed by G75. Residue S87 coordinates Mg(2+). Anthranilate is bound at residue N105. R160 serves as a coordination point for anthranilate. Mg(2+)-binding residues include D216 and E217.

Belongs to the anthranilate phosphoribosyltransferase family. As to quaternary structure, homodimer. Mg(2+) serves as cofactor.

It carries out the reaction N-(5-phospho-beta-D-ribosyl)anthranilate + diphosphate = 5-phospho-alpha-D-ribose 1-diphosphate + anthranilate. It participates in amino-acid biosynthesis; L-tryptophan biosynthesis; L-tryptophan from chorismate: step 2/5. Catalyzes the transfer of the phosphoribosyl group of 5-phosphorylribose-1-pyrophosphate (PRPP) to anthranilate to yield N-(5'-phosphoribosyl)-anthranilate (PRA). This is Anthranilate phosphoribosyltransferase from Picrophilus torridus (strain ATCC 700027 / DSM 9790 / JCM 10055 / NBRC 100828 / KAW 2/3).